The primary structure comprises 412 residues: DNA polymerase IV 2 (412 aa).

The UmuC domain occupies 7-192; it reads IFLVDMQSFY…LPVGSMFGVG (186 aa). Residues D11 and D107 each coordinate Mg(2+). Residue E108 is part of the active site.

This sequence belongs to the DNA polymerase type-Y family. In terms of assembly, monomer. It depends on Mg(2+) as a cofactor.

Its subcellular location is the cytoplasm. The enzyme catalyses DNA(n) + a 2'-deoxyribonucleoside 5'-triphosphate = DNA(n+1) + diphosphate. In terms of biological role, poorly processive, error-prone DNA polymerase involved in untargeted mutagenesis. Copies undamaged DNA at stalled replication forks, which arise in vivo from mismatched or misaligned primer ends. These misaligned primers can be extended by PolIV. Exhibits no 3'-5' exonuclease (proofreading) activity. May be involved in translesion synthesis (TSL), in conjunction with the beta clamp from PolIII. In Bacillus subtilis (strain 168), this protein is DNA polymerase IV 2 (dinB2).